Here is a 182-residue protein sequence, read N- to C-terminus: Adenylate kinase (182 aa).

G12 to T17 is a binding site for ATP. Residues S32 to V61 form an NMP region. AMP contacts are provided by residues T33, R38, E59–V61, G85–R88, and Q92. Residues S126–D132 form an LID region. R127 provides a ligand contact to ATP. AMP contacts are provided by R129 and R140. G168 contacts ATP.

It belongs to the adenylate kinase family. Monomer.

The protein localises to the cytoplasm. The enzyme catalyses AMP + ATP = 2 ADP. The protein operates within purine metabolism; AMP biosynthesis via salvage pathway; AMP from ADP: step 1/1. Catalyzes the reversible transfer of the terminal phosphate group between ATP and AMP. Plays an important role in cellular energy homeostasis and in adenine nucleotide metabolism. The polypeptide is Adenylate kinase (Prochlorococcus marinus (strain MIT 9303)).